The sequence spans 392 residues: V-type proton ATPase subunit C (392 aa).

N-acetylalanine is present on Ala2.

The protein belongs to the V-ATPase C subunit family. In terms of assembly, V-ATPase is a heteromultimeric enzyme composed of a peripheral catalytic V1 complex (components A to H) attached to an integral membrane V0 proton pore complex (components: a, c, c', c'', d, e, f and VOA1). Interacts directly with VMA4.

Its subcellular location is the vacuole membrane. Functionally, subunit of the V1 complex of vacuolar(H+)-ATPase (V-ATPase), a multisubunit enzyme composed of a peripheral complex (V1) that hydrolyzes ATP and a membrane integral complex (V0) that translocates protons. V-ATPase is responsible for acidifying and maintaining the pH of intracellular compartments. Subunit C is necessary for the assembly of the catalytic sector of the enzyme and is likely to have a specific function in its catalytic activity. Reversibly leaves the enzyme after glucose depletion, causing the catalytic subcomplex V1 to detach from the V0 section. This chain is V-type proton ATPase subunit C, found in Saccharomyces cerevisiae (strain ATCC 204508 / S288c) (Baker's yeast).